Here is a 211-residue protein sequence, read N- to C-terminus: Mitotic spindle assembly checkpoint protein MAD2B (211 aa).

The 191-residue stretch at 13–203 (QVVADILCEF…SDILKMQLYV (191 aa)) folds into the HORMA domain.

Homooligomer. Interacts with rev1. Interacts with rev3l. Interacts with fzr1 (in complex with the anaphase promoting complex APC). May interact with cdc20.

The protein localises to the nucleus. It is found in the cytoplasm. Its subcellular location is the cytoskeleton. The protein resides in the spindle. In terms of biological role, adapter protein able to interact with different proteins and involved in different biological processes. Mediates the interaction between the error-prone DNA polymerase zeta catalytic subunit rev3l and the inserter polymerase rev1, thereby mediating the second polymerase switching in translesion DNA synthesis. Translesion DNA synthesis releases the replication blockade of replicative polymerases, stalled in presence of DNA lesions. May also play a role in signal transduction in response to DNA damage. May regulate the activation of the anaphase promoting complex APC thereby regulating progression through the cell cycle. Through transcriptional regulation may play a role in epithelial-mesenchymal transdifferentiation. The protein is Mitotic spindle assembly checkpoint protein MAD2B (mad2l2) of Xenopus tropicalis (Western clawed frog).